The primary structure comprises 271 residues: Ribosomal RNA small subunit methyltransferase A (271 aa).

The S-adenosyl-L-methionine site is built by Asn19, Leu21, Gly46, Glu67, Asp92, and Asn114.

Belongs to the class I-like SAM-binding methyltransferase superfamily. rRNA adenine N(6)-methyltransferase family. RsmA subfamily.

Its subcellular location is the cytoplasm. It catalyses the reaction adenosine(1518)/adenosine(1519) in 16S rRNA + 4 S-adenosyl-L-methionine = N(6)-dimethyladenosine(1518)/N(6)-dimethyladenosine(1519) in 16S rRNA + 4 S-adenosyl-L-homocysteine + 4 H(+). Functionally, specifically dimethylates two adjacent adenosines (A1518 and A1519) in the loop of a conserved hairpin near the 3'-end of 16S rRNA in the 30S particle. May play a critical role in biogenesis of 30S subunits. This Aeromonas hydrophila subsp. hydrophila (strain ATCC 7966 / DSM 30187 / BCRC 13018 / CCUG 14551 / JCM 1027 / KCTC 2358 / NCIMB 9240 / NCTC 8049) protein is Ribosomal RNA small subunit methyltransferase A.